A 331-amino-acid chain; its full sequence is Probable cytosolic iron-sulfur protein assembly protein Ciao1 (331 aa).

WD repeat units lie at residues 12–51, 57–96, 97–136, 142–181, 188–227, 246–285, and 297–331; these read GHKG…WTTK, GHKR…ATLE, GHEN…EFEC, AHTQ…SDWD, SHTS…NEAG, QHSR…KRDE, and AHEQ…KLQE.

It belongs to the WD repeat CIA1 family.

In terms of biological role, essential component of the cytosolic iron-sulfur (Fe/S) protein assembly machinery. Required for the maturation of extramitochondrial Fe/S proteins. This chain is Probable cytosolic iron-sulfur protein assembly protein Ciao1, found in Drosophila grimshawi (Hawaiian fruit fly).